Consider the following 220-residue polypeptide: Vesicle-associated membrane protein 7 (220 aa).

Alanine 2 is modified (N-acetylalanine; partial). Topologically, residues 2–188 (AILFAVVARG…ARAMCMKNLK (187 aa)) are cytoplasmic. The region spanning 7–110 (VVARGTTILA…AMNSEFSSVL (104 aa)) is the Longin domain. Residues 125-185 (KVMETQAQVD…RNLARAMCMK (61 aa)) form the v-SNARE coiled-coil homology domain. Phosphoserine is present on residues serine 167 and serine 168. The chain crosses the membrane as a helical; Anchor for type IV membrane protein span at residues 189–209 (LTIIIIIVSIVFIYIIVSPLC). Topologically, residues 210-220 (GGFTWPSCVKK) are vesicular.

The protein belongs to the synaptobrevin family. In terms of assembly, component of the SNARE complex composed of STX4, SNAP23 and VAMP7 that binds SYT7 during lysosomal exocytosis. Component of the SNARE complex composed of STX7, STX8, VAMP7 and VTI1B that is required for heterotypic fusion of late endosomes with lysosomes. May interact with STX17. Interacts with PICALM. Interacts with RAB21. Detected in all tissues tested.

The protein localises to the cytoplasmic vesicle. It localises to the secretory vesicle membrane. Its subcellular location is the golgi apparatus. The protein resides in the trans-Golgi network membrane. It is found in the late endosome membrane. The protein localises to the lysosome membrane. It localises to the endoplasmic reticulum membrane. Its subcellular location is the phagosome membrane. The protein resides in the synapse. It is found in the synaptosome. Involved in the targeting and/or fusion of transport vesicles to their target membrane during transport of proteins from the early endosome to the lysosome. Required for heterotypic fusion of late endosomes with lysosomes and homotypic lysosomal fusion. Required for calcium regulated lysosomal exocytosis. Involved in the export of chylomicrons from the endoplasmic reticulum to the cis Golgi. Required for exocytosis of mediators during eosinophil and neutrophil degranulation, and target cell killing by natural killer cells. Required for focal exocytosis of late endocytic vesicles during phagosome formation. In Homo sapiens (Human), this protein is Vesicle-associated membrane protein 7 (VAMP7).